Consider the following 183-residue polypeptide: Adenine phosphoribosyltransferase (183 aa).

Belongs to the purine/pyrimidine phosphoribosyltransferase family. As to quaternary structure, homodimer.

The protein resides in the cytoplasm. The enzyme catalyses AMP + diphosphate = 5-phospho-alpha-D-ribose 1-diphosphate + adenine. It functions in the pathway purine metabolism; AMP biosynthesis via salvage pathway; AMP from adenine: step 1/1. In terms of biological role, catalyzes a salvage reaction resulting in the formation of AMP, that is energically less costly than de novo synthesis. This Shewanella piezotolerans (strain WP3 / JCM 13877) protein is Adenine phosphoribosyltransferase.